The sequence spans 101 residues: MIPGELLIGPGEHPLNTGRRTKTLLVRNTGDRPIQVGSHYHFAETNQALDFDRAAARGMRLNIASGTAVRFEPGQERTVELLDYAGARLVFGFQGRVQGAP.

Belongs to the urease beta subunit family. As to quaternary structure, heterotrimer of UreA (gamma), UreB (beta) and UreC (alpha) subunits. Three heterotrimers associate to form the active enzyme.

It localises to the cytoplasm. It carries out the reaction urea + 2 H2O + H(+) = hydrogencarbonate + 2 NH4(+). Its pathway is nitrogen metabolism; urea degradation; CO(2) and NH(3) from urea (urease route): step 1/1. In Verminephrobacter eiseniae (strain EF01-2), this protein is Urease subunit beta.